A 152-amino-acid chain; its full sequence is Aspartate carbamoyltransferase regulatory chain (152 aa).

Cys108, Cys113, Cys137, and Cys140 together coordinate Zn(2+).

This sequence belongs to the PyrI family. Contains catalytic and regulatory chains. Zn(2+) is required as a cofactor.

Functionally, involved in allosteric regulation of aspartate carbamoyltransferase. This Neisseria meningitidis serogroup B (strain ATCC BAA-335 / MC58) protein is Aspartate carbamoyltransferase regulatory chain.